Consider the following 354-residue polypeptide: Uroporphyrinogen decarboxylase (354 aa).

Substrate is bound by residues 28 to 32 (RQAGR), D78, Y155, S210, and H325.

This sequence belongs to the uroporphyrinogen decarboxylase family. As to quaternary structure, homodimer.

Its subcellular location is the cytoplasm. The catalysed reaction is uroporphyrinogen III + 4 H(+) = coproporphyrinogen III + 4 CO2. It functions in the pathway porphyrin-containing compound metabolism; protoporphyrin-IX biosynthesis; coproporphyrinogen-III from 5-aminolevulinate: step 4/4. Catalyzes the decarboxylation of four acetate groups of uroporphyrinogen-III to yield coproporphyrinogen-III. The protein is Uroporphyrinogen decarboxylase of Trichodesmium erythraeum (strain IMS101).